Consider the following 610-residue polypeptide: Myosin light chain kinase 2, skeletal/cardiac muscle (610 aa).

Disordered regions lie at residues 1–168 and 196–240; these read MATE…HSPS and VSET…DTSQ. Ala-2 carries the post-translational modification N-acetylalanine. Basic and acidic residues-rich tracts occupy residues 32–63 and 70–82; these read SEKE…KKNP and KTPE…KKGD. Residues 94 to 109 are compositionally biased toward gly residues; the sequence is SGEGDGGGGPAEGGTG. The span at 141–157 shows a compositional bias: basic and acidic residues; the sequence is GEAKAGKKAAECREAGR. A phosphoserine mark is found at Ser-160, Ser-166, and Ser-168. The 256-residue stretch at 299-554 folds into the Protein kinase domain; that stretch reads MNSKEALGGG…AEQCLAHPWL (256 aa). ATP-binding positions include 305 to 313 and Lys-328; that span reads LGGGKFGAV. Asp-420 acts as the Proton acceptor in catalysis. Position 459 is a phosphothreonine (Thr-459). A calmodulin-binding region spans residues 588–600; sequence IAVSAANRFKKIS.

The protein belongs to the protein kinase superfamily. CAMK Ser/Thr protein kinase family. As to quaternary structure, may interact with centrin.

The protein localises to the cytoplasm. The catalysed reaction is L-seryl-[myosin light chain] + ATP = O-phospho-L-seryl-[myosin light chain] + ADP + H(+). It catalyses the reaction L-threonyl-[myosin light chain] + ATP = O-phospho-L-threonyl-[myosin light chain] + ADP + H(+). Functionally, implicated in the level of global muscle contraction and cardiac function. Phosphorylates a specific serine in the N-terminus of a myosin light chain. The polypeptide is Myosin light chain kinase 2, skeletal/cardiac muscle (Mylk2) (Rattus norvegicus (Rat)).